A 124-amino-acid polypeptide reads, in one-letter code: ATP synthase epsilon chain (124 aa).

Belongs to the ATPase epsilon chain family. In terms of assembly, F-type ATPases have 2 components, CF(1) - the catalytic core - and CF(0) - the membrane proton channel. CF(1) has five subunits: alpha(3), beta(3), gamma(1), delta(1), epsilon(1). CF(0) has three main subunits: a, b and c.

Its subcellular location is the cell membrane. Its function is as follows. Produces ATP from ADP in the presence of a proton gradient across the membrane. The protein is ATP synthase epsilon chain of Streptomyces avermitilis (strain ATCC 31267 / DSM 46492 / JCM 5070 / NBRC 14893 / NCIMB 12804 / NRRL 8165 / MA-4680).